We begin with the raw amino-acid sequence, 90 residues long: Co-chaperonin GroES (90 aa).

This sequence belongs to the GroES chaperonin family. In terms of assembly, heptamer of 7 subunits arranged in a ring. Interacts with the chaperonin GroEL.

The protein resides in the cytoplasm. Together with the chaperonin GroEL, plays an essential role in assisting protein folding. The GroEL-GroES system forms a nano-cage that allows encapsulation of the non-native substrate proteins and provides a physical environment optimized to promote and accelerate protein folding. GroES binds to the apical surface of the GroEL ring, thereby capping the opening of the GroEL channel. This is Co-chaperonin GroES from Thermosipho africanus (strain TCF52B).